We begin with the raw amino-acid sequence, 372 residues long: Alanine racemase (372 aa).

Lysine 48 functions as the Proton acceptor; specific for D-alanine in the catalytic mechanism. The residue at position 48 (lysine 48) is an N6-(pyridoxal phosphate)lysine. Position 143 (arginine 143) interacts with substrate. Tyrosine 268 acts as the Proton acceptor; specific for L-alanine in catalysis. Residue methionine 316 coordinates substrate.

It belongs to the alanine racemase family. The cofactor is pyridoxal 5'-phosphate.

It carries out the reaction L-alanine = D-alanine. Its pathway is amino-acid biosynthesis; D-alanine biosynthesis; D-alanine from L-alanine: step 1/1. In terms of biological role, catalyzes the interconversion of L-alanine and D-alanine. May also act on other amino acids. This chain is Alanine racemase (alr), found in Vibrio vulnificus (strain YJ016).